Here is a 1081-residue protein sequence, read N- to C-terminus: Cellulose synthase A catalytic subunit 1 [UDP-forming] (1081 aa).

Met-1 is modified (N-acetylmethionine). Residues 1-270 (MEASAGLVAG…SRVVPIPSSR (270 aa)) are Cytoplasmic-facing. The Zn(2+) site is built by Cys-39, Cys-42, Cys-58, Cys-61, Cys-66, Cys-69, Cys-81, and Cys-84. An RING-type; degenerate zinc finger spans residues 39-85 (CQICGDDVGLAETGDVFVACNECAFPVCRPCYEYERKDGTQCCPQCK). The interval 118 to 195 (GANKARHQRH…RQPVPVRIVD (78 aa)) is disordered. Positions 127 to 139 (HGEEFSSSSRHES) are enriched in basic and acidic residues. Residues 158–168 (PDTQSVRTTSG) are compositionally biased toward polar residues. The chain crosses the membrane as a helical span at residues 271 to 291 (LTPYRVVIILRLIILCFFLQY). Residues 292 to 299 (RTTHPVKN) are Extracellular-facing. A helical transmembrane segment spans residues 300-320 (AYPLWLTSVICEIWFAFSWLL). The Cytoplasmic segment spans residues 321-856 (DQFPKWYPIN…LLERIAYINT (536 aa)). UDP-alpha-D-glucose contacts are provided by Ser-359, Lys-365, Glu-366, and Asp-395. The active site involves Asp-395. Positions 449–476 (VKERRAMKREYEEFKVRINALVAKAQKI) form a coiled coil. Lys-536 contributes to the UDP-alpha-D-glucose binding site. Mn(2+)-binding residues include Lys-537 and Asp-561. The active site involves Asp-780. A helical membrane pass occupies residues 857–877 (IVYPITSIPLIAYCILPAFCL). At 878 to 889 (ITDRFIIPEISN) the chain is on the extracellular side. Residues 890–910 (YASIWFILLFISIAVTGILEL) traverse the membrane as a helical segment. Residues 911 to 925 (RWSGVSIEDWWRNEQ) lie on the Cytoplasmic side of the membrane. Residues 926-946 (FWVIGGTSAHLFAVFQGLLKV) traverse the membrane as a helical segment. Residues 947-976 (LAGIDTNFTVTSKATDEDGDFAELYIFKWT) are Extracellular-facing. A glycan (N-linked (GlcNAc...) asparagine) is linked at Asn-953. A helical transmembrane segment spans residues 977-997 (ALLIPPTTVLLVNLIGIVAGV). Residues 998-1008 (SYAVNSGYQSW) are Cytoplasmic-facing. A helical transmembrane segment spans residues 1009–1029 (GPLFGKLFFALWVIAHLYPFL). At 1030–1038 (KGLLGRQNR) the chain is on the extracellular side. A helical transmembrane segment spans residues 1039 to 1059 (TPTIVIVWSVLLASIFSLLWV). At 1060-1081 (RINPFVDANPNANNFNGKGGVF) the chain is on the cytoplasmic side.

Belongs to the glycosyltransferase 2 family. Plant cellulose synthase subfamily. In terms of assembly, interacts with CESA3 and CESA6. Assembly with CESA3 and CESA6 is required for functional complex in primary cell wall cellulose synthesis. Interacts with STL1 and STL2, but not with GOT1. Binds to CSI1. Interacts with PAT24/TIP1. Requires Zn(2+) as cofactor. Mn(2+) is required as a cofactor. In terms of processing, S-acylated. As to expression, expressed in germinating seeds, seedlings, roots, stems, shoots leaves and flowers, but not in mature flowers.

It is found in the cell membrane. It carries out the reaction [(1-&gt;4)-beta-D-glucosyl](n) + UDP-alpha-D-glucose = [(1-&gt;4)-beta-D-glucosyl](n+1) + UDP + H(+). Its pathway is glycan metabolism; plant cellulose biosynthesis. Its function is as follows. Catalytic subunit of cellulose synthase terminal complexes ('rosettes'), required for beta-1,4-glucan microfibril crystallization, a major mechanism of the cell wall formation. Involved in the primary cell wall formation. Required during embryogenesis for cell elongation, orientation of cell expansion and complex cell wall formations, such as interdigitated pattern of epidermal pavement cells, stomatal guard cells and trichomes. Plays a role in lateral roots formation, but seems not necessary for the development of tip-growing cells such as root hairs. The presence of each protein CESA1 and CESA6 is critical for cell expansion after germination. This is Cellulose synthase A catalytic subunit 1 [UDP-forming] from Arabidopsis thaliana (Mouse-ear cress).